The primary structure comprises 899 residues: Protein argonaute (899 aa).

The disordered stretch occupies residues 107–129 (TQKPKRRGGRAGGMRGNRGGPST). The span at 116 to 125 (RAGGMRGNRG) shows a compositional bias: gly residues. The PAZ domain maps to 229 to 313 (SMCELLNENR…KQDDYCNSVL (85 aa)). The region spanning 555–878 (LVVVVIPGPK…LSKFCGEILG (324 aa)) is the Piwi domain.

It belongs to the argonaute family. Ago subfamily. As to quaternary structure, interacts with miR2. Highly specific binding to the mRNA m7G-cap. May be a component of the RNA-induced silencing complex (RISC), a sequence-specific, multicomponent nuclease that destroys or silences messenger RNAs homologous to the silencing trigger.

The protein resides in the cytoplasm. Its function is as follows. Plays an essential role in growth and, with Dicer, also involved in microRNA (miRNA)-mediated translational repression. The RNA interference pathway is implicated in antigenic variation having a role in regulation of variant-specific surface protein (VSP)-coding gene expression. Several VSP genes are transcribed but only transcripts encoding the VSP to be expressed accumulate. Antisense RNAs corresponding to the silenced VSP genes are detected. This chain is Protein argonaute, found in Giardia intestinalis (strain ATCC 50581 / GS clone H7) (Giardia lamblia).